The primary structure comprises 653 residues: MKTIDMKYLRLLAKEYPTIAKTATEIINLEAIMNLPKGTEHFLSDVHGEYSAFEQVLRNGSGVVKRKIRDIFGAELDDAEINSLSTLIYYPEEKMDLIASETEDLHAWYRTTLFRLIELCQYVASKYTRSKVRKAMPEDFAYILEELLHENYNEDDKKLYYEEILQHIISLGRAEEFISALSLLIQQLVVDHLHIVGDVYDRGPYPDKIMDTLMNYHSLDFQWGNHDILWMGAASGSRVCAANVIRISARYLNLDILEDSYGISLRPLALFADEVYKDDPCTYFQPKNEENINYSNAEITQIARMHKAISIIQFKLEGEIIKRRKEFDMNHRLLLQFIDYKKGTIQLKGKEYQLLDNHFPTINPENPYELTDAERELIGKITAAFKNCRRLQKHVQFLYSKGSMFLTYNGNLLYHGCIPLHKDGTFMEMKLRGEKYAGRALLEQFEILTREAYVRPTGTKEKKYACDIVWYLWTGAISSLFGKSEMTTFERYFVAEKETHTEEKNPYYKLRNNELICKQILEEFELDGECGHIINGHTPVKEGKGESPIKASGKMLVIDGGFAKAYHKETNLAGYTLLFNSYGLQLVSHQPFTTKEDAIKNETDILSTRQVIEMEINRKRVRDTDIGAKLSEQAEDLKLLLDAYRNGLLHENR.

The protein belongs to the FBPase class 3 family. Mn(2+) is required as a cofactor.

It catalyses the reaction beta-D-fructose 1,6-bisphosphate + H2O = beta-D-fructose 6-phosphate + phosphate. The protein operates within carbohydrate biosynthesis; gluconeogenesis. In Listeria monocytogenes serovar 1/2a (strain ATCC BAA-679 / EGD-e), this protein is Fructose-1,6-bisphosphatase class 3.